A 284-amino-acid chain; its full sequence is Protein phosphatase 1 regulatory subunit 3B (284 aa).

The PP1-binding motif signature appears at 61 to 64 (RVSF). In terms of domain architecture, CBM21 spans 124-232 (RNRLQTNHVC…SNKGKNYRIT (109 aa)). S260 carries the post-translational modification Phosphoserine.

In terms of assembly, interacts with glycogen, PPP1CC catalytic subunit of PP1 and PYGL. Associates with glycogen particles. Forms complexes with debranching enzyme, glycogen phosphorylase, glycogen synthase and phosphorylase kinase which is necessary for its regulation of PP1 activity. Highly expressed in liver (at protein level). Expressed predominantly in liver. Expressed moderately in heart. Expressed weakly in prostate, stomach, thyroid, lung, kidney, spleen and skeletal muscle.

In terms of biological role, acts as a glycogen-targeting subunit for phosphatase PP1. Facilitates interaction of the PP1 with enzymes of the glycogen metabolism and regulates its activity. Suppresses the rate at which PP1 dephosphorylates (inactivates) glycogen phosphorylase and enhances the rate at which it activates glycogen synthase and therefore limits glycogen breakdown. Its activity is inhibited by PYGL, resulting in inhibition of the glycogen synthase and glycogen phosphorylase phosphatase activities of PP1. Dramatically increases basal and insulin-stimulated glycogen synthesis upon overexpression in hepatocytes. This chain is Protein phosphatase 1 regulatory subunit 3B (Ppp1r3b), found in Mus musculus (Mouse).